Here is a 115-residue protein sequence, read N- to C-terminus: NAD(P)H-quinone oxidoreductase subunit M, organellar chromatophore (115 aa).

Belongs to the complex I NdhM subunit family. As to quaternary structure, NDH-1 can be composed of about 15 different subunits; different subcomplexes with different compositions have been identified which probably have different functions.

It is found in the plastid. The protein resides in the organellar chromatophore thylakoid membrane. It catalyses the reaction a plastoquinone + NADH + (n+1) H(+)(in) = a plastoquinol + NAD(+) + n H(+)(out). The enzyme catalyses a plastoquinone + NADPH + (n+1) H(+)(in) = a plastoquinol + NADP(+) + n H(+)(out). Its function is as follows. NDH-1 shuttles electrons from an unknown electron donor, via FMN and iron-sulfur (Fe-S) centers, to quinones in the respiratory and/or the photosynthetic chain. The immediate electron acceptor for the enzyme in this species is believed to be plastoquinone. Couples the redox reaction to proton translocation, and thus conserves the redox energy in a proton gradient. The protein is NAD(P)H-quinone oxidoreductase subunit M, organellar chromatophore of Paulinella chromatophora.